We begin with the raw amino-acid sequence, 182 residues long: Oligoribonuclease (182 aa).

One can recognise an Exonuclease domain in the interval 8 to 171; sequence LIWIDLEMTG…DDIRESIKEL (164 aa). Tyr129 is an active-site residue.

Belongs to the oligoribonuclease family.

Its subcellular location is the cytoplasm. Its function is as follows. 3'-to-5' exoribonuclease specific for small oligoribonucleotides. The polypeptide is Oligoribonuclease (Actinobacillus succinogenes (strain ATCC 55618 / DSM 22257 / CCUG 43843 / 130Z)).